Reading from the N-terminus, the 466-residue chain is 3-isopropylmalate dehydratase large subunit (466 aa).

The [4Fe-4S] cluster site is built by C347, C407, and C410.

The protein belongs to the aconitase/IPM isomerase family. LeuC type 1 subfamily. As to quaternary structure, heterodimer of LeuC and LeuD. Requires [4Fe-4S] cluster as cofactor.

The catalysed reaction is (2R,3S)-3-isopropylmalate = (2S)-2-isopropylmalate. Its pathway is amino-acid biosynthesis; L-leucine biosynthesis; L-leucine from 3-methyl-2-oxobutanoate: step 2/4. Catalyzes the isomerization between 2-isopropylmalate and 3-isopropylmalate, via the formation of 2-isopropylmaleate. The chain is 3-isopropylmalate dehydratase large subunit from Shigella dysenteriae serotype 1 (strain Sd197).